An 82-amino-acid chain; its full sequence is Omega-conotoxin PnVIB (82 aa).

Positions 1–22 are cleaved as a signal peptide; the sequence is MKLTCMMIVAVLFLTAWTVVTA. Positions 23–52 are excised as a propeptide; it reads EPHSSNVLENLYLKAHHEMENPEASKLNTR. 3 cysteine pairs are disulfide-bonded: cysteine 56–cysteine 73, cysteine 63–cysteine 77, and cysteine 72–cysteine 81.

In terms of tissue distribution, expressed by the venom duct.

It localises to the secreted. Its function is as follows. Omega-conotoxins act at presynaptic membranes, they bind and block voltage-gated calcium channels (Cav). Acts on high voltage-activated (HVA) calcium currents in molluscan neurons. This is Omega-conotoxin PnVIB from Conus pennaceus (Feathered cone).